The chain runs to 147 residues: MRALIQRVHNARVEVEGAIVGQTGPGLLILLCAMAGDTEAEAEKLITKITKLRIFKDEAGKMNRSLLDIGGGALVVSQFTLSADTSRGNRPGFSAAAPPQEGEALYLHAVDLLRGHGVATQTGQFGADMDVHLVNDGPVTIWMDTSA.

The Gly-cisPro motif, important for rejection of L-amino acids motif lies at 137-138 (GP).

Belongs to the DTD family. Homodimer.

The protein resides in the cytoplasm. It catalyses the reaction glycyl-tRNA(Ala) + H2O = tRNA(Ala) + glycine + H(+). The enzyme catalyses a D-aminoacyl-tRNA + H2O = a tRNA + a D-alpha-amino acid + H(+). An aminoacyl-tRNA editing enzyme that deacylates mischarged D-aminoacyl-tRNAs. Also deacylates mischarged glycyl-tRNA(Ala), protecting cells against glycine mischarging by AlaRS. Acts via tRNA-based rather than protein-based catalysis; rejects L-amino acids rather than detecting D-amino acids in the active site. By recycling D-aminoacyl-tRNA to D-amino acids and free tRNA molecules, this enzyme counteracts the toxicity associated with the formation of D-aminoacyl-tRNA entities in vivo and helps enforce protein L-homochirality. The sequence is that of D-aminoacyl-tRNA deacylase from Jannaschia sp. (strain CCS1).